We begin with the raw amino-acid sequence, 401 residues long: Probable tRNA sulfurtransferase (401 aa).

One can recognise a THUMP domain in the interval 60-165; sequence EPIIDKLKTV…QDGTYVTCHD (106 aa). ATP-binding positions include 183–184, 208–209, arginine 265, glycine 287, and glutamine 296; these read ML and HF.

This sequence belongs to the ThiI family.

The protein localises to the cytoplasm. The enzyme catalyses [ThiI sulfur-carrier protein]-S-sulfanyl-L-cysteine + a uridine in tRNA + 2 reduced [2Fe-2S]-[ferredoxin] + ATP + H(+) = [ThiI sulfur-carrier protein]-L-cysteine + a 4-thiouridine in tRNA + 2 oxidized [2Fe-2S]-[ferredoxin] + AMP + diphosphate. The catalysed reaction is [ThiS sulfur-carrier protein]-C-terminal Gly-Gly-AMP + S-sulfanyl-L-cysteinyl-[cysteine desulfurase] + AH2 = [ThiS sulfur-carrier protein]-C-terminal-Gly-aminoethanethioate + L-cysteinyl-[cysteine desulfurase] + A + AMP + 2 H(+). It functions in the pathway cofactor biosynthesis; thiamine diphosphate biosynthesis. Functionally, catalyzes the ATP-dependent transfer of a sulfur to tRNA to produce 4-thiouridine in position 8 of tRNAs, which functions as a near-UV photosensor. Also catalyzes the transfer of sulfur to the sulfur carrier protein ThiS, forming ThiS-thiocarboxylate. This is a step in the synthesis of thiazole, in the thiamine biosynthesis pathway. The sulfur is donated as persulfide by IscS. The sequence is that of Probable tRNA sulfurtransferase from Geobacillus thermodenitrificans (strain NG80-2).